The primary structure comprises 177 residues: Meiotically up-regulated gene 121 protein (177 aa).

The signal sequence occupies residues 1–23; it reads MKGFVVISRFILTLFILITPGLA. N121 carries an N-linked (GlcNAc...) asparagine glycan.

Its subcellular location is the endoplasmic reticulum. The protein resides in the golgi apparatus. In terms of biological role, has a role in meiosis. In Schizosaccharomyces pombe (strain 972 / ATCC 24843) (Fission yeast), this protein is Meiotically up-regulated gene 121 protein (mug121).